We begin with the raw amino-acid sequence, 130 residues long: S-protein homolog 30 (130 aa).

N-linked (GlcNAc...) asparagine glycosylation is found at Asn64 and Asn77.

This sequence belongs to the plant self-incompatibility (S1) protein family.

It localises to the secreted. The polypeptide is S-protein homolog 30 (Arabidopsis thaliana (Mouse-ear cress)).